A 293-amino-acid chain; its full sequence is GTP cyclohydrolase FolE2 (293 aa).

The protein belongs to the GTP cyclohydrolase IV family.

It catalyses the reaction GTP + H2O = 7,8-dihydroneopterin 3'-triphosphate + formate + H(+). It functions in the pathway cofactor biosynthesis; 7,8-dihydroneopterin triphosphate biosynthesis; 7,8-dihydroneopterin triphosphate from GTP: step 1/1. Functionally, converts GTP to 7,8-dihydroneopterin triphosphate. The chain is GTP cyclohydrolase FolE2 from Pseudomonas entomophila (strain L48).